The primary structure comprises 617 residues: Dihydroxy-acid dehydratase (617 aa).

Asp81 provides a ligand contact to Mg(2+). Cys122 provides a ligand contact to [2Fe-2S] cluster. Mg(2+) is bound by residues Asp123 and Lys124. Lys124 bears the N6-carboxylysine mark. A [2Fe-2S] cluster-binding site is contributed by Cys195. Position 491 (Glu491) interacts with Mg(2+). Ser517 functions as the Proton acceptor in the catalytic mechanism.

It belongs to the IlvD/Edd family. In terms of assembly, homodimer. [2Fe-2S] cluster serves as cofactor. The cofactor is Mg(2+).

It carries out the reaction (2R)-2,3-dihydroxy-3-methylbutanoate = 3-methyl-2-oxobutanoate + H2O. The enzyme catalyses (2R,3R)-2,3-dihydroxy-3-methylpentanoate = (S)-3-methyl-2-oxopentanoate + H2O. The protein operates within amino-acid biosynthesis; L-isoleucine biosynthesis; L-isoleucine from 2-oxobutanoate: step 3/4. It participates in amino-acid biosynthesis; L-valine biosynthesis; L-valine from pyruvate: step 3/4. In terms of biological role, functions in the biosynthesis of branched-chain amino acids. Catalyzes the dehydration of (2R,3R)-2,3-dihydroxy-3-methylpentanoate (2,3-dihydroxy-3-methylvalerate) into 2-oxo-3-methylpentanoate (2-oxo-3-methylvalerate) and of (2R)-2,3-dihydroxy-3-methylbutanoate (2,3-dihydroxyisovalerate) into 2-oxo-3-methylbutanoate (2-oxoisovalerate), the penultimate precursor to L-isoleucine and L-valine, respectively. The chain is Dihydroxy-acid dehydratase from Buchnera aphidicola subsp. Diuraphis noxia.